A 2731-amino-acid polypeptide reads, in one-letter code: Teneurin-1 (2731 aa).

The segment at 1–72 is disordered; the sequence is MEQTDCKPYQ…KRKDVEKSTQ (72 aa). In terms of domain architecture, Teneurin N-terminal spans 1–318; it reads MEQTDCKPYQ…KPYRCCNWKC (318 aa). The Cytoplasmic segment spans residues 1 to 324; the sequence is MEQTDCKPYQ…NWKCTALSAT (324 aa). Basic and acidic residues predominate over residues 44 to 55; sequence ETLHEYNQELRR. The Nuclear localization signal (NLS) signature appears at 62–65; the sequence is RKRK. At Ser105 the chain carries Phosphoserine. At Thr109 the chain carries Phosphothreonine. Ser116 carries the phosphoserine modification. Positions 175-241 are disordered; sequence DSAQDMQSSP…PAPPTSTQDS (67 aa). Polar residues predominate over residues 178–189; that stretch reads QDMQSSPHNQFT. A compositionally biased stretch (pro residues) spans 192-201; the sequence is PLPPPPPPPH. A compositionally biased stretch (polar residues) spans 214–224; it reads DSLQRRSMTTR. The short motif at 290–297 is the Required for interaction with SORBS1 (Ten-1 ICD form) element; that stretch reads PPPRPLPR. A helical membrane pass occupies residues 325–345; sequence AITVTLALLLAYVIAVHLFGL. Residues 346–2731 are Extracellular-facing; that stretch reads TWQLQPVGQI…FMRQSEIGRR (2386 aa). Asn432 is a glycosylation site (N-linked (GlcNAc...) asparagine). 8 consecutive EGF-like domains span residues 527 to 558, 559 to 590, 591 to 623, 624 to 656, 657 to 690, 691 to 720, 721 to 752, and 760 to 795; these read IMDDCSTNCNGNGECISGHCHCFPGFLGPDCA, RDSCPVLCGGNGEYEKGHCVCRNGWKGPECDV, PEEQCIDPTCFGHGTCIMGVCICVPGYKGEICE, EEDCLDPMCSSHGICVKGECHCSTGWGGVNCET, PLPICQEQCSGHGTFLLDTGVCSCDPKWTGSDCS, TELCTMECGSHGVCSRGICQCEEGWVGPTC, EERSCHSHCAEHGQCKDGKCECSPGWEGDHCT, and VRDGCPGLCFGNGRCTLDQNGWHCVCQVGWSGTGCN. Disulfide bonds link Cys531-Cys541, Cys535-Cys546, Cys548-Cys557, Cys566-Cys577, Cys579-Cys588, Cys595-Cys606, Cys600-Cys611, Cys613-Cys622, Cys627-Cys638, Cys632-Cys643, Cys645-Cys654, Cys665-Cys678, Cys680-Cys689, Cys694-Cys704, Cys698-Cys709, Cys711-Cys720, Cys725-Cys735, Cys729-Cys740, Cys742-Cys751, Cys764-Cys774, Cys768-Cys783, and Cys785-Cys794. N-linked (GlcNAc...) asparagine glycans are attached at residues Asn904 and Asn1083. NHL repeat units lie at residues 1193–1218, 1298–1342, 1357–1408, 1420–1464, and 1487–1530; these read LFAPVALASGPDGSVYVGDFNFVRRI, SHCG…NAVI, LSCD…IAGR, FLVS…VTTN, and CFSG…ISKN. A YD 1 repeat occupies 1540–1559; it reads YEIASPADQELYQFTVNGTH. N-linked (GlcNAc...) asparagine glycosylation is found at Asn1556 and Asn1573. YD repeat units lie at residues 1576–1596, 1614–1638, 1639–1660, and 1661–1681; these read YNAEGDLGAITSSNGNSVHIR, YWLTISSNGVLKRVSAQGYNLALMT, YPGNTGLLATKSNENGWTTVYE, and YDPEGHLTNATFPTGEVSSFH. Residues Asn1669, Asn1705, Asn1743, Asn1763, Asn1787, and Asn1848 are each glycosylated (N-linked (GlcNAc...) asparagine). YD repeat units lie at residues 1851–1870, 1871–1891, 1892–1910, 1911–1931, 1939–1955, 1956–1975, 1976–1995, 1998–2018, 2021–2041, 2091–2111, and 2119–2139; these read YSPSGLVTFIQRGTWNEKME, YDQSGKIISRTWADGKIWSYT, YLEKSVMLLLHSQRRYIFE, YDQSDCLLSVTMPSMVRHSLQ, YRNIYTPPDSSTSFIQD, YSRDGRLLQTLHLGTGRRVL, YKYTKQARLSEILYDTTQVT, YEESSGVIKTIHLMHDGFICT, YRQTGPLIGRQIFRFSEEGLV, YDLNQVITTTVMKHTKIFNAN, and YEILKAIAYWMTIQYDNMGRM. Asn2151 carries N-linked (GlcNAc...) asparagine glycosylation. 5 YD repeats span residues 2159 to 2179, 2180 to 2200, 2202 to 2222, 2234 to 2254, and 2256 to 2276; these read YDADGQLQTVSVNDKIQWRYS, YDLNGNINLLSHGNSARLTPL, YDLRDRITRLGEIQYKMDEDG, YNSNGLLQKAYNKVSGWTVQY, and YDGLGRRVASKSSLGQHLQFF. Asn2291 carries an N-linked (GlcNAc...) asparagine glycan. YD repeat units follow at residues 2302–2319 and 2320–2343; these read YDLQGHLIAMELSSGEEY and YVACDNMGTPLAVFSSRGQVIKEI. Ser2586 carries the phosphoserine modification. Asn2608 carries N-linked (GlcNAc...) asparagine glycosylation.

This sequence belongs to the tenascin family. Teneurin subfamily. Homodimer; disulfide-linked. Heterodimer with either TENM2 or TENM3. May also form heterodimer with TENM4. Ten-1 ICD interacts with SORBS1 (via third SH3 domain). Interacts with MBD1 isoform 2. Ten-1 ICD interacts with HINT1. In terms of processing, once secreted, may also be cleaved to give rise to the TCAP-1 form. Post-translationally, derives from the plasma membrane form by proteolytic processing. Further proteolytic cleavage may generate 11.9 and 4.7 kDa bioactive peptides. As to expression, isoform 1 and isoform 2 are expressed in the brain. Isoform 2 is expressed in the granular layer of the dentate gyrus and the pyramidal layer (Py) of the CA1, CA2 and CA3 of the hippocampus (at protein level). Expressed in the cortex, thalamus, CA1, CA2, CA3, dentate gyrus and granular layer of the hippocampus. Weakly expressed in kidney, testis and lung.

The protein localises to the cell membrane. Its subcellular location is the cytoplasm. It is found in the secreted. It localises to the nucleus. The protein resides in the nucleus speckle. The protein localises to the nucleus matrix. Its subcellular location is the cytoskeleton. Involved in neural development, regulating the establishment of proper connectivity within the nervous system. May function as a cellular signal transducer. Its function is as follows. Plays a role in the regulation of neuroplasticity in the limbic system. Mediates a rapid reorganization of actin- and tubulin-based cytoskeleton elements with an increase in dendritic arborization and spine density formation of neurons in the hippocampus and amygdala. Induces BDNF transcription inhibition in neurons. Activates the mitogen-activated protein (MAP) kinase 2 (MEK2) and extracellular signal-regulated kinase (ERK) cascade. Also acts as a bioactive neuroprotective peptide on limbic neurons of the brain and regulates stress-induced behavior: attenuates alkalosis-associated necrotic cell death and the effects of corticotropin-releasing factor (CRF) on c-fos/FOS induction and on the reinstatement of cocaine seeking. In terms of biological role, induces gene transcription activation. The protein is Teneurin-1 (Tenm1) of Mus musculus (Mouse).